Reading from the N-terminus, the 628-residue chain is tRNA (guanine(37)-N(1))-methyltransferase (628 aa).

S-adenosyl-L-methionine-binding positions include His-265, 303–304 (DL), 342–343 (DG), and Asn-445.

Belongs to the class I-like SAM-binding methyltransferase superfamily. TRM5/TYW2 family. In terms of assembly, monomer.

The protein resides in the mitochondrion matrix. It localises to the nucleus. It is found in the cytoplasm. It catalyses the reaction guanosine(37) in tRNA + S-adenosyl-L-methionine = N(1)-methylguanosine(37) in tRNA + S-adenosyl-L-homocysteine + H(+). Specifically methylates the N1 position of guanosine-37 in various cytoplasmic and mitochondrial tRNAs. Methylation is not dependent on the nature of the nucleoside 5' of the target nucleoside. This is the first step in the biosynthesis of wybutosine (yW), a modified base adjacent to the anticodon of tRNAs and required for accurate decoding. In Mycosarcoma maydis (Corn smut fungus), this protein is tRNA (guanine(37)-N(1))-methyltransferase.